The chain runs to 360 residues: Proline-rich protein 11 (360 aa).

Disordered regions lie at residues 20–43 and 174–201; these read KKKE…SPER and PPTL…PPLA. Thr33 is modified (phosphothreonine). Ser40 is subject to Phosphoserine. Pro residues predominate over residues 175-201; the sequence is PTLPQPASHFPPPPPPPPLPPPPPPLA. Residues 285-291 carry the Phosphodegron motif; the sequence is LITPGKS. Thr287 carries the post-translational modification Phosphothreonine. At Ser291 the chain carries Phosphoserine. A D-box motif is present at residues 296-304; that stretch reads RKLLRKVDV. A KEN box motif is present at residues 316–318; the sequence is KEN. Residues 325–330 carry the Phosphodegron motif; that stretch reads LTPVMT. The segment at 340-360 is disordered; that stretch reads AHPRSPTPTLPLSTSSFDEQN. Ser344 is subject to Phosphoserine. 2 positions are modified to phosphothreonine: Thr346 and Thr348. Residues 349–360 are compositionally biased toward low complexity; it reads LPLSTSSFDEQN.

In terms of processing, ubiquitinated. Rapidly degraded by the proteasome; degradation may involve FBXW7-specific phosphorylated phosphodegron motifs. As to expression, ubiquitously expressed.

It is found in the cytoplasm. Its subcellular location is the nucleus. Plays a critical role in cell cycle progression. In Homo sapiens (Human), this protein is Proline-rich protein 11 (PRR11).